Consider the following 148-residue polypeptide: Lipoprotein MlpH (148 aa).

The first 17 residues, 1-17, serve as a signal peptide directing secretion; the sequence is MKIINILFCLFLLMLNG. Residue Cys18 is the site of N-palmitoyl cysteine attachment. A lipid anchor (S-diacylglycerol cysteine) is attached at Cys18. The disordered stretch occupies residues 26–61; it reads LKNNAQQTKSRRKRDLTQKEVTQEKPKSKEELLREK. Positions 40–61 are enriched in basic and acidic residues; that stretch reads DLTQKEVTQEKPKSKEELLREK.

This sequence belongs to the Multicopy lipoprotein (Mlp) family.

It localises to the cell outer membrane. Functionally, an outer membrane protein that may participate in pathogenesis. Some human Lyme disease patients have antibodies against this protein. The Mlp proteins probably undergo intragenic recombination, generating new alleles. This Borreliella burgdorferi (strain ATCC 35210 / DSM 4680 / CIP 102532 / B31) (Borrelia burgdorferi) protein is Lipoprotein MlpH.